The primary structure comprises 933 residues: Thyroid peroxidase (933 aa).

A signal peptide spans 1–18 (MRALAVLSVTLVMACTEA). The Extracellular portion of the chain corresponds to 19–846 (FFPFISRGKE…TCVDSGRLPR (828 aa)). N-linked (GlcNAc...) asparagine glycosylation is present at Asn-129. The cysteines at positions 142 and 158 are disulfide-linked. Residue Asp-238 coordinates heme b. The active-site Proton acceptor is the His-239. Asp-240 contacts Ca(2+). Intrachain disulfides connect Cys-259/Cys-269 and Cys-263/Cys-286. Asn-307 carries N-linked (GlcNAc...) asparagine glycosylation. Thr-321, Phe-323, Asp-325, and Ser-327 together coordinate Ca(2+). Asn-342 is a glycosylation site (N-linked (GlcNAc...) asparagine). Positions 399 and 494 each coordinate heme b. A glycan (N-linked (GlcNAc...) asparagine) is linked at Asn-569. Cystine bridges form between Cys-598–Cys-655 and Cys-696–Cys-721. The Sushi domain occupies 740–795 (DKCGFPESVENGDFVHCEESGRRVLVYSCRHGYELQGREQLTCTQEGWDFQPPLCK). Residues 796-839 (DVNECADGAHPPCHASARCRNTKGGFQCLCADPYELGDDGRTCV) form the EGF-like; calcium-binding domain. Cystine bridges form between Cys-800-Cys-814, Cys-808-Cys-823, and Cys-825-Cys-838. The helical transmembrane segment at 847–871 (VTWISMSLAALLIGGFAGLTSTVIC) threads the bilayer. Over 872 to 933 (RWTRTGTKST…RDTHRLPRAL (62 aa)) the chain is Cytoplasmic. Positions 881-933 (TLPISETGGGTPELRCGKHQAVGTSPQRAAAQDSEQESAGMEGRDTHRLPRAL) are disordered. Over residues 922–933 (EGRDTHRLPRAL) the composition is skewed to basic and acidic residues.

It belongs to the peroxidase family. XPO subfamily. In terms of assembly, interacts with DUOX1, DUOX2 and CYBA. Ca(2+) serves as cofactor. Heme b is required as a cofactor. In terms of processing, glycosylated. Post-translationally, heme is covalently bound through a H(2)O(2)-dependent autocatalytic process. Heme insertion is important for the delivery of protein at the cell surface. Cleaved in its N-terminal part.

It is found in the membrane. The protein localises to the cell surface. The enzyme catalyses 2 iodide + H2O2 + 2 H(+) = diiodine + 2 H2O. The catalysed reaction is [thyroglobulin]-L-tyrosine + iodide + H2O2 + H(+) = [thyroglobulin]-3-iodo-L-tyrosine + 2 H2O. It catalyses the reaction [thyroglobulin]-3-iodo-L-tyrosine + iodide + H2O2 + H(+) = [thyroglobulin]-3,5-diiodo-L-tyrosine + 2 H2O. It carries out the reaction 2 [thyroglobulin]-3,5-diiodo-L-tyrosine + H2O2 = [thyroglobulin]-L-thyroxine + [thyroglobulin]-dehydroalanine + 2 H2O. The enzyme catalyses [thyroglobulin]-3-iodo-L-tyrosine + [thyroglobulin]-3,5-diiodo-L-tyrosine + H2O2 = [thyroglobulin]-3,3',5-triiodo-L-thyronine + [thyroglobulin]-dehydroalanine + 2 H2O. It participates in hormone biosynthesis; thyroid hormone biosynthesis. Functionally, iodination and coupling of the hormonogenic tyrosines in thyroglobulin to yield the thyroid hormones T(3) and T(4). The sequence is that of Thyroid peroxidase from Homo sapiens (Human).